Here is a 99-residue protein sequence, read N- to C-terminus: Microcin E492 (99 aa).

The signal sequence occupies residues 1-15; that stretch reads MREISQKDLNLAFGA. Positions 80–99 are disordered; that stretch reads SWNGSGSGYNSATSSSGSGS. Residues 87 to 99 are compositionally biased toward low complexity; it reads GYNSATSSSGSGS. Serine 99 carries the serine microcin E492 siderophore ester modification.

Belongs to the class IIa microcin family. In terms of assembly, multimer. Possibly forms a homodimer or a homotrimer. In terms of processing, the C-terminal Ser is modified by attachment to a siderophore similar to enterobactin, which can bind one atom of iron. The modification consists of an ester linkage of the serine carboxyl to O6 of a glucose which is linked by a C-glycosidic bond to the 5'-benzoyl of a linear triester of N-(2,3-dihydroxybenzoyl)serine. Presence of the siderophore ester increases the antibacterial activity of the protein.

In terms of biological role, channel-forming bacteriocin. Forms cation-selective channels. Active on enterobacteria, with highest activity against E.coli. Not active on other Gram-negative bacteria, Gram-positive bacteria or fungi. The unmodified protein is active against E.coli and S.enteritidis. When the siderophore ester is present at Ser-99, antibacterial activity against these species is increased and activity is also detected against E.cloacae and K.pneumoniae. Neutralized by its immunity protein MceB. The polypeptide is Microcin E492 (Klebsiella pneumoniae).